We begin with the raw amino-acid sequence, 428 residues long: AA14 family lytic polysaccharide monooxygenase A (428 aa).

Positions 1-21 (MLRSLPASLALVAAFASKASA) are cleaved as a signal peptide. 2 N-linked (GlcNAc...) asparagine glycosylation sites follow: Asn34 and Asn52. Intrachain disulfides connect Cys88–Cys112, Cys131–Cys158, Cys174–Cys179, Cys181–Cys203, and Cys223–Cys239. The N-linked (GlcNAc...) asparagine glycan is linked to Asn155. Disordered stretches follow at residues 216–239 (KPAV…PGNC) and 292–428 (SSGT…HNAH). The segment covering 223-232 (CGADPDHGKP) has biased composition (basic and acidic residues). A glycan (N-linked (GlcNAc...) asparagine) is linked at Asn238. Residues 292-379 (SSGTGSSPTS…SVATEASSSP (88 aa)) show a composition bias toward low complexity. Residues 380–402 (IASTTVDEAVVSSSTVGSINPTR) show a composition bias toward polar residues. Basic residues predominate over residues 414–428 (QKKKRKHARHLHNAH).

Requires Cu(2+) as cofactor.

The protein resides in the secreted. Lytic polysaccharide monooxygenase (LPMO) showing oxidase and peroxidase activities that are common for LPMOs. Catalysis by LPMOs requires the reduction of the active-site copper from Cu(II) to Cu(I) by a reducing agent and H(2)O(2) or O(2) as a cosubstrate. Shows no activity on cellulose-associated xylan or any other tested polysaccharide substrate, meaning that the substrate rremains unknown. In Trametes coccinea (strain BRFM310) (Pycnoporus coccineus), this protein is AA14 family lytic polysaccharide monooxygenase A.